A 637-amino-acid polypeptide reads, in one-letter code: MFAVRFDPSQLVEESVEDEAPKKVIPLKRSKSDEEDESSEEETESSEDEEEKEKEEVADEDSMDVDDESSGDDDEEAEEGEVDAASDHPDKHNSVMSRFQQTLALQDKMDSESLVNENEEVNDENIVESHNLERIPQPAKVKESAVAPAAVSQYKSAAWLNTETIHYDSSMVRKFSDFEDQIDPKLLKNIQQNFSTDTFPIQSILLETLLPTLNFSYNITKKNFTRRVGDVLVNASTGSGKTLAYSIPILQILSKRTVNKLRALVIVPTKLLINQVYETFNNLAQGTSLIVSISKLENSLKEENKKLLQNEPDILITTPGRLVDHLQSGAVNLRNLKFLVLDEADRLLNQSFQNWCNELLNKLKTDKQDHMPGNIVKMVFSATLTTNTEKLHGLQFYNPKLFVMDSVKLYHLPRMLQEYNLHIPTAKTSYKPLFLLRLLSEINGSKMLVFVKSNESSLRLASLLSIMIEHKLGSQFDINSVNSNNTKAENRRIVNEFASNNNTSKVQVLITTDVMSRGVDINDITDVLNYDVPISSQQYIHRCGRTARAQSKGTAYNMLIGKGERTFWATHIDNDISRDIDGCQPQVWGQHDQQNQKDEGQEEEAQVLPLLTVDPETESIYKECLNSLKEKVDTNRK.

Residues 1–93 (MFAVRFDPSQ…AASDHPDKHN (93 aa)) form a disordered region. Over residues 33 to 84 (DEEDESSEEETESSEDEEEKEKEEVADEDSMDVDDESSGDDDEEAEEGEVDA) the composition is skewed to acidic residues. A Q motif motif is present at residues 198-206 (TFPIQSILL). The Helicase ATP-binding domain maps to 222–402 (KNFTRRVGDV…GLQFYNPKLF (181 aa)). 235–242 (ASTGSGKT) is an ATP binding site. The short motif at 342 to 345 (DEAD) is the DEAD box element. The Helicase C-terminal domain maps to 434–608 (FLLRLLSEIN…EGQEEEAQVL (175 aa)).

Belongs to the DEAD box helicase family. DDX51/DBP6 subfamily. As to quaternary structure, associated with pre-ribosomal particles.

It is found in the nucleus. It localises to the nucleolus. The enzyme catalyses ATP + H2O = ADP + phosphate + H(+). In terms of biological role, ATP-binding RNA helicase involved in the biogenesis of 60S ribosomal subunits and is required for the normal formation of 25S and 5.8S rRNAs. In Vanderwaltozyma polyspora (strain ATCC 22028 / DSM 70294 / BCRC 21397 / CBS 2163 / NBRC 10782 / NRRL Y-8283 / UCD 57-17) (Kluyveromyces polysporus), this protein is ATP-dependent RNA helicase DBP6 (DBP6).